The primary structure comprises 99 residues: RING finger protein Z (99 aa).

The N-myristoyl glycine; by host moiety is linked to residue G2. Residues 31–67 (CKSCWFENKGLVECNNHYLCLNCLTLLLSVSNRCPIC) form an RING-type; atypical zinc finger. The tract at residues 74–99 (KLRPSAAPTAPPTGAADSIRPPPYSP) is disordered. The span at 77 to 89 (PSAAPTAPPTGAA) shows a compositional bias: low complexity. A PTAP/PSAP motif motif is present at residues 81–84 (PTAP). The PPXY motif signature appears at 94–97 (PPPY).

The protein belongs to the arenaviridae Z protein family. As to quaternary structure, interacts with protein NP; this interaction probably directs the encapsidated genome to budding sites. Interacts (via RING domain) with polymerase L; this interaction inhibits viral transcription and replication, Z partially blocks the product exit tunnel for the releasing nascent RNA product. Interacts with the glycoprotein complex; this interaction plays a role in virion budding. Interacts with host eIF4E; this interaction results in eIF4E reduced affinity for its substrate, the 5'-m7 G cap structure. Interacts (via late-budding domain) with host TSG101; this interaction is essential for budding and release of viral particles. Interacts with host RPLP0; this interaction may serve to load ribosome-like particles inside the virion. Interacts with host PML; this interaction induces PML bodies redistribution in the cytoplasm upon viral infection. Interacts with host TAX1BP1. Myristoylation is required for the role of RING finger protein Z in assembly and budding.

The protein localises to the virion. The protein resides in the host cytoplasm. It localises to the host perinuclear region. It is found in the host cell membrane. In terms of biological role, plays a crucial role in virion assembly and budding. Expressed late in the virus life cycle, it acts as an inhibitor of viral transcription and RNA synthesis by interacting with the viral polymerase L. Presumably recruits the NP encapsidated genome to cellular membranes at budding sites via direct interaction with NP. Plays critical roles in the final steps of viral release by interacting with host TSG101, a member of the vacuolar protein-sorting pathway and using other cellular host proteins involved in vesicle formation pathway. The budding of the virus progeny occurs after association of protein Z with the viral glycoprotein complex SSP-GP1-GP2 at the cell periphery, step that requires myristoylation of protein Z. Also selectively represses protein production by associating with host eIF4E. In cell-based minigenome assay, has an inhibitory effect on the ribonucleoprotein machinery (vRNP), which is responsible for the replication and transcription of the viral genome. In Homo sapiens (Human), this protein is RING finger protein Z.